Reading from the N-terminus, the 226-residue chain is MINSIQWEYIFNTKLAIESFPYVIKGIGYTLLISFVSMFAGTVIGLFISLARMSKLALLRWPAKLYISFMRGVPILVILFILYFGFPYIGIEFSAVTAALIGFSLNSAAYIAEINRSAISSVEKGQWEAASSLGLSYWQTMRGIILPQSIRIALPPLANVLLDLIKASSLAAMITVPELLQHAKIIGGREFDYMTMYILTALIYWAICSIAAVFQNILEKKYAHYV.

The 189-residue stretch at 27-215 folds into the ABC transmembrane type-1 domain; sequence IGYTLLISFV…AICSIAAVFQ (189 aa). The next 5 helical transmembrane spans lie at 31–51, 73–93, 94–114, 160–180, and 194–214; these read LLIS…ISLA, VPIL…GIEF, SAVT…IAEI, VLLD…PELL, and MTMY…AAVF.

This sequence belongs to the binding-protein-dependent transport system permease family. HisMQ subfamily.

The protein resides in the cell membrane. Functionally, part of a binding-protein-dependent transport system. Probably responsible for the translocation of the substrate across the membrane. This is Probable amino-acid ABC transporter permease protein YckA (yckA) from Bacillus subtilis (strain 168).